The following is a 162-amino-acid chain: 2-C-methyl-D-erythritol 2,4-cyclodiphosphate synthase (162 aa).

D10 and H12 together coordinate a divalent metal cation. 4-CDP-2-C-methyl-D-erythritol 2-phosphate is bound by residues D10 to H12 and H36 to S37. Position 44 (H44) interacts with a divalent metal cation. 4-CDP-2-C-methyl-D-erythritol 2-phosphate-binding positions include D58–G60, F63–D67, and R144.

This sequence belongs to the IspF family. Homotrimer. A divalent metal cation serves as cofactor.

It carries out the reaction 4-CDP-2-C-methyl-D-erythritol 2-phosphate = 2-C-methyl-D-erythritol 2,4-cyclic diphosphate + CMP. Its pathway is isoprenoid biosynthesis; isopentenyl diphosphate biosynthesis via DXP pathway; isopentenyl diphosphate from 1-deoxy-D-xylulose 5-phosphate: step 4/6. Its function is as follows. Involved in the biosynthesis of isopentenyl diphosphate (IPP) and dimethylallyl diphosphate (DMAPP), two major building blocks of isoprenoid compounds. Catalyzes the conversion of 4-diphosphocytidyl-2-C-methyl-D-erythritol 2-phosphate (CDP-ME2P) to 2-C-methyl-D-erythritol 2,4-cyclodiphosphate (ME-CPP) with a corresponding release of cytidine 5-monophosphate (CMP). The chain is 2-C-methyl-D-erythritol 2,4-cyclodiphosphate synthase from Laribacter hongkongensis (strain HLHK9).